We begin with the raw amino-acid sequence, 202 residues long: Large ribosomal subunit protein mL40 (202 aa).

The segment at 42–79 (IQHQQTASYASKGKSGPPAGMFSGQKAGSKKSKGPKQV) is disordered.

This sequence belongs to the mitochondrion-specific ribosomal protein mL40 family. As to quaternary structure, component of the mitochondrial large ribosomal subunit (mt-LSU). Mature N.crassa 74S mitochondrial ribosomes consist of a small (37S) and a large (54S) subunit. The 37S small subunit contains a 16S ribosomal RNA (16S mt-rRNA) and 32 different proteins. The 54S large subunit contains a 23S rRNA (23S mt-rRNA) and 42 different proteins. mL40 is binding to NAD.

Its subcellular location is the mitochondrion. In terms of biological role, component of the mitochondrial ribosome (mitoribosome), a dedicated translation machinery responsible for the synthesis of mitochondrial genome-encoded proteins, including at least some of the essential transmembrane subunits of the mitochondrial respiratory chain. The mitoribosomes are attached to the mitochondrial inner membrane and translation products are cotranslationally integrated into the membrane. This Neurospora crassa (strain ATCC 24698 / 74-OR23-1A / CBS 708.71 / DSM 1257 / FGSC 987) protein is Large ribosomal subunit protein mL40 (mrpl28).